Here is a 422-residue protein sequence, read N- to C-terminus: Isocitrate dehydrogenase [NADP] (422 aa).

Threonine 94 contributes to the NADP(+) binding site. Serine 103, asparagine 105, arginine 109, arginine 119, and arginine 143 together coordinate D-threo-isocitrate. Position 310 (aspartate 310) interacts with Mg(2+). Residues 344–350 (HGTAPKY), asparagine 357, tyrosine 396, and arginine 400 each bind NADP(+).

It belongs to the isocitrate and isopropylmalate dehydrogenases family. In terms of assembly, homodimer. Requires Mg(2+) as cofactor. The cofactor is Mn(2+).

It carries out the reaction D-threo-isocitrate + NADP(+) = 2-oxoglutarate + CO2 + NADPH. Functionally, catalyzes the oxidative decarboxylation of isocitrate to 2-oxoglutarate and carbon dioxide with the concomitant reduction of NADP(+). The chain is Isocitrate dehydrogenase [NADP] (icd) from Staphylococcus epidermidis (strain ATCC 35984 / DSM 28319 / BCRC 17069 / CCUG 31568 / BM 3577 / RP62A).